Here is a 361-residue protein sequence, read N- to C-terminus: Myb/SANT-like DNA-binding domain-containing protein 7 (361 aa).

One can recognise a Myb-like domain in the interval Arg-11 to Lys-70. 2 disordered regions span residues Thr-174–Ser-198 and Arg-217–Arg-272. Polar residues-rich tracts occupy residues Ala-187 to Ser-198 and Pro-226 to Arg-249.

In Homo sapiens (Human), this protein is Myb/SANT-like DNA-binding domain-containing protein 7.